A 98-amino-acid polypeptide reads, in one-letter code: Putative protein adenylyltransferase MJ0126 (98 aa).

The GSX(10)DXD motif motif lies at 31 to 45; it reads GSYARNEQTETSDID. Positions 43, 45, and 75 each coordinate Mg(2+).

The protein belongs to the MntA antitoxin family. Probably forms a complex with cognate toxin MJ0125. The cofactor is Mg(2+).

It carries out the reaction L-tyrosyl-[protein] + ATP = O-(5'-adenylyl)-L-tyrosyl-[protein] + diphosphate. It catalyses the reaction O-(5'-adenylyl)-L-tyrosyl-[protein] + ATP = O-[5'-(adenylyl-(5'-&gt;3')-adenylyl)]-L-tyrosyl-[protein] + diphosphate. Its function is as follows. Probable antitoxin component of a putative type VII toxin-antitoxin (TA) system. Neutralizes cognate toxic MJ0125 by di-AMPylation. The protein is Putative protein adenylyltransferase MJ0126 of Methanocaldococcus jannaschii (strain ATCC 43067 / DSM 2661 / JAL-1 / JCM 10045 / NBRC 100440) (Methanococcus jannaschii).